A 215-amino-acid polypeptide reads, in one-letter code: MMEETTKIPQATAKRLPLYHRYLKYLDESGKERVSSAELSEAVKVDSATIRRDFSYFGALGKKGYGYNVSYILDFFSKTLSQDKQTNVALIGVGNLGTALLHYNFMKNNNIKIVAAFDVDPAKVGSVQQDIPIYHLNDMEEIVRENGVEVVILTVPADEAQVTVDRLIEADVKGILNFTPARISVPKQVRVHHIDLTTELQTLIYFLENYPAKTE.

The segment at residues 18 to 57 (LYHRYLKYLDESGKERVSSAELSEAVKVDSATIRRDFSYF) is a DNA-binding region (H-T-H motif). An NAD(+)-binding site is contributed by 92–97 (GVGNLG).

It belongs to the transcriptional regulatory Rex family. In terms of assembly, homodimer.

Its subcellular location is the cytoplasm. Modulates transcription in response to changes in cellular NADH/NAD(+) redox state. This is Redox-sensing transcriptional repressor Rex from Listeria innocua serovar 6a (strain ATCC BAA-680 / CLIP 11262).